Consider the following 328-residue polypeptide: Malate dehydrogenase (328 aa).

G16–S22 lines the NAD(+) pocket. The substrate site is built by R97 and R103. Residues N110, Q117, and V134–N136 each bind NAD(+). Residues N136 and R167 each contribute to the substrate site. Catalysis depends on H192, which acts as the Proton acceptor.

The protein belongs to the LDH/MDH superfamily. MDH type 2 family. As to quaternary structure, homotetramer.

The enzyme catalyses (S)-malate + NAD(+) = oxaloacetate + NADH + H(+). Citrate activates the enzyme in the oxidation of malate to oxaloacetate and inhibits it in the reverse reaction. Its function is as follows. Catalyzes the reversible oxidation of malate to oxaloacetate. Exhibits higher catalytic efficiency for oxaloacetate reduction than for malate oxidation in vitro. Almost equally active both for NADH and NADPH on the bases of the kcat values at pH 6.5, but catalytic efficiency for oxaloacetate reduction is 50-fold higher with NADH. In Corynebacterium glutamicum (strain ATCC 13032 / DSM 20300 / JCM 1318 / BCRC 11384 / CCUG 27702 / LMG 3730 / NBRC 12168 / NCIMB 10025 / NRRL B-2784 / 534), this protein is Malate dehydrogenase.